The chain runs to 666 residues: Polyamine deacetylase HDAC10 (666 aa).

The segment at methionine 1–glycine 323 is histone deacetylase. The active site involves histidine 135.

The protein belongs to the histone deacetylase family. HD type 2 subfamily. As to quaternary structure, interacts with HDAC3. Interacts with HDAC2 and NCOR2/SMRT. Interacts with HSPA8/HSC70. Interacts with MSH2. In terms of tissue distribution, widely expressed.

The protein resides in the cytoplasm. Its subcellular location is the nucleus. It catalyses the reaction N(8)-acetylspermidine + H2O = spermidine + acetate. The catalysed reaction is N-acetylputrescine + H2O = putrescine + acetate. It carries out the reaction N-acetylcadaverine + H2O = cadaverine + acetate. The enzyme catalyses N(6)-acetyl-L-lysyl-[protein] + H2O = L-lysyl-[protein] + acetate. Its function is as follows. Polyamine deacetylase (PDAC), which acts preferentially on N(8)-acetylspermidine, and also on acetylcadaverine and acetylputrescine. Exhibits attenuated catalytic activity toward N(1),N(8)-diacetylspermidine and very low activity, if any, toward N(1)-acetylspermidine. Histone deacetylase activity has been observed in vitro. Has also been shown to be involved in MSH2 deacetylation. The physiological relevance of protein/histone deacetylase activity is unclear and could be very weak. May play a role in the promotion of late stages of autophagy, possibly autophagosome-lysosome fusion and/or lysosomal exocytosis in neuroblastoma cells. May play a role in homologous recombination. May promote DNA mismatch repair. The protein is Polyamine deacetylase HDAC10 (Hdac10) of Mus musculus (Mouse).